A 387-amino-acid polypeptide reads, in one-letter code: [LysW]-aminoadipate semialdehyde/glutamate semialdehyde transaminase (387 aa).

Residues 96–97 (GT) and F123 contribute to the pyridoxal 5'-phosphate site. R126 is a substrate binding site. Position 207-210 (207-210 (DEVQ)) interacts with pyridoxal 5'-phosphate. Position 236 is an N6-(pyridoxal phosphate)lysine (K236). S264 serves as a coordination point for substrate. Residue T265 participates in pyridoxal 5'-phosphate binding.

It belongs to the class-III pyridoxal-phosphate-dependent aminotransferase family. LysJ subfamily. Homodimer. The cofactor is pyridoxal 5'-phosphate.

It is found in the cytoplasm. It carries out the reaction [amino-group carrier protein]-C-terminal-gamma-(L-lysyl)-L-glutamate + 2-oxoglutarate = [amino-group carrier protein]-C-terminal-N-(1-carboxy-5-oxopentan-1-yl)-L-glutamine + L-glutamate. It catalyses the reaction [amino-group carrier protein]-C-terminal-gamma-(L-ornithyl)-L-glutamate + 2-oxoglutarate = [amino-group carrier protein]-C-terminal-gamma-(L-glutamyl-5-semialdehyde)-L-glutamate + L-glutamate. Its pathway is amino-acid biosynthesis; L-lysine biosynthesis via AAA pathway; L-lysine from L-alpha-aminoadipate (Thermus route): step 4/5. It participates in amino-acid biosynthesis; L-arginine biosynthesis. In terms of biological role, involved in both the arginine and lysine biosynthetic pathways. The chain is [LysW]-aminoadipate semialdehyde/glutamate semialdehyde transaminase from Sulfurisphaera tokodaii (strain DSM 16993 / JCM 10545 / NBRC 100140 / 7) (Sulfolobus tokodaii).